The sequence spans 116 residues: Large ribosomal subunit protein bL17 (116 aa).

This sequence belongs to the bacterial ribosomal protein bL17 family. As to quaternary structure, part of the 50S ribosomal subunit. Contacts protein L32.

This chain is Large ribosomal subunit protein bL17, found in Prochlorococcus marinus subsp. pastoris (strain CCMP1986 / NIES-2087 / MED4).